Here is a 1309-residue protein sequence, read N- to C-terminus: Lysine-specific demethylase 2B (1309 aa).

Position 26 is a phosphoserine (Ser-26). One can recognise a JmjC domain in the interval 147 to 315 (FSHTKLEHLV…MQLRIYEIED (169 aa)). Residue Thr-208 participates in substrate binding. Fe cation-binding residues include His-211 and Asp-213. Position 228 (Lys-228) interacts with substrate. Position 283 (His-283) interacts with Fe cation. Positions 378–403 (DMEEESCEQQPQEEEEEEEDKEEEGD) are enriched in acidic residues. Positions 378-476 (DMEEESCEQQ…PTGSPATEVS (99 aa)) are disordered. Residues 404–413 (GADKTPKPPT) are compositionally biased toward basic and acidic residues. Low complexity predominate over residues 415 to 424 (DPTSPTSTPP). Phosphoserine occurs at positions 447 and 450. Thr-466 carries the phosphothreonine modification. Positions 467-476 (PTGSPATEVS) are enriched in polar residues. Ser-470 carries the post-translational modification Phosphoserine. A CXXC-type zinc finger spans residues 579-625 (ARRRRTRCRKCEACLRTECGECHFCKDMKKFGGPGRMKQSCIMRQCI). The Zn(2+) site is built by Cys-586, Cys-589, Cys-592, Cys-597, Cys-600, Cys-603, Cys-619, Cys-624, Cys-635, Cys-638, Cys-661, Cys-664, His-669, Cys-672, Cys-692, and Cys-695. The PHD-type zinc-finger motif lies at 632–698 (TAVCLVCGEA…CWECPKCNHA (67 aa)). Disordered stretches follow at residues 700-816 (KTGK…SLSP) and 828-1005 (QLKP…SASP). The segment covering 722–772 (KEQKMNRDNKEGQEPAKRRSECEEAPRRRSDEHPKKVPADGILRRKSDDVH) has biased composition (basic and acidic residues). The segment covering 792–816 (SSLQTSPGSSSHLSPRPPLGSSLSP) has biased composition (low complexity). Residues Lys-830 and Lys-863 each participate in a glycyl lysine isopeptide (Lys-Gly) (interchain with G-Cter in SUMO2) cross-link. Residues 883-892 (SRSSSPTAGP) are compositionally biased toward polar residues. Basic residues predominate over residues 905-914 (KVKMRRKRRL). Residues 915–933 (VNKELSKELSKELNHEIQK) are compositionally biased toward basic and acidic residues. Positions 916–944 (NKELSKELSKELNHEIQKTESTLAHESQQ) form a coiled coil. Ser-924 carries the post-translational modification Phosphoserine. A compositionally biased stretch (polar residues) spans 934–946 (TESTLAHESQQPI). Residues Ser-948 and Ser-952 each carry the phosphoserine modification. A compositionally biased stretch (basic and acidic residues) spans 955-968 (DEPKRPLSHCERPH). A phosphoserine mark is found at Ser-991 and Ser-1004. The 47-residue stretch at 1032–1078 (DGAAHVMHREVWMAVFSYLSHRDLCVCMRVCRTWNRWCCDKRLWTRI) folds into the F-box domain. 6 LRR repeats span residues 1106–1127 (WTNISKKQLSWLINRLPGLRDL), 1129–1155 (LSGCSWIAVSALCSSSCPLLRTLDVQW), 1195–1220 (GLDITDVSLRLIIRHMPLLSKLQLSY), 1221–1250 (CNHINDQSINLLTAVGTTTRDSLTEVNLSD), 1251–1275 (CNKVTDLCLSFFKRCGNICHIDLRY), and 1276–1309 (CKQVTKEGCEQFIAEMSVSVQFGQVEEKLLQKLS).

The protein belongs to the JHDM1 histone demethylase family. As to quaternary structure, interacts with SKP1, forming heterodimers. The KDM2B-SKP1 heterodimeric complex interacts with the PCGF1-BCORL heterodimeric complex to form a homotetrameric polycomb repression complex 1 (PRC1.1). Directly interacts with CUL1. The SKP1-KDM2B interacts with UBB. Requires Fe(2+) as cofactor.

The protein localises to the nucleus. It localises to the nucleolus. It is found in the chromosome. It catalyses the reaction N(6),N(6)-dimethyl-L-lysyl(36)-[histone H3] + 2 2-oxoglutarate + 2 O2 = L-lysyl(36)-[histone H3] + 2 formaldehyde + 2 succinate + 2 CO2. With respect to regulation, histone demethylase activity is inhibited by fumarate. Histone demethylase that demethylates 'Lys-4' and 'Lys-36' of histone H3, thereby playing a central role in histone code. Preferentially demethylates trimethylated H3 'Lys-4' and dimethylated H3 'Lys-36' residue while it has weak or no activity for mono- and tri-methylated H3 'Lys-36'. Preferentially binds the transcribed region of ribosomal RNA and represses the transcription of ribosomal RNA genes which inhibits cell growth and proliferation. May also serve as a substrate-recognition component of the SCF (SKP1-CUL1-F-box protein)-type E3 ubiquitin ligase complex. The chain is Lysine-specific demethylase 2B (Kdm2b) from Mus musculus (Mouse).